The sequence spans 218 residues: Octanoyltransferase (218 aa).

Residues 31–206 (REAADEVWLV…QLVKHLDYAE (176 aa)) enclose the BPL/LPL catalytic domain. Residues 70–77 (RGGQVTYH), 137–139 (SLG), and 150–152 (GLA) each bind substrate. C168 acts as the Acyl-thioester intermediate in catalysis.

It belongs to the LipB family.

The protein localises to the cytoplasm. The enzyme catalyses octanoyl-[ACP] + L-lysyl-[protein] = N(6)-octanoyl-L-lysyl-[protein] + holo-[ACP] + H(+). The protein operates within protein modification; protein lipoylation via endogenous pathway; protein N(6)-(lipoyl)lysine from octanoyl-[acyl-carrier-protein]: step 1/2. Functionally, catalyzes the transfer of endogenously produced octanoic acid from octanoyl-acyl-carrier-protein onto the lipoyl domains of lipoate-dependent enzymes. Lipoyl-ACP can also act as a substrate although octanoyl-ACP is likely to be the physiological substrate. The polypeptide is Octanoyltransferase (Pseudomonas savastanoi pv. phaseolicola (strain 1448A / Race 6) (Pseudomonas syringae pv. phaseolicola (strain 1448A / Race 6))).